A 135-amino-acid chain; its full sequence is Large ribosomal subunit protein eL27 (135 aa).

Belongs to the eukaryotic ribosomal protein eL27 family.

The protein is Large ribosomal subunit protein eL27 (RPL27) of Pisum sativum (Garden pea).